The primary structure comprises 992 residues: Sorting nexin-19 (992 aa).

In terms of domain architecture, PXA spans 95-272; sequence ERQLEREINR…VLVGIFSKAR (178 aa). The segment at 410-442 is disordered; the sequence is ALEPKDGEASEGAEAEEGPGTETETGLPVSTLN. Residues 418–428 show a composition bias toward acidic residues; that stretch reads ASEGAEAEEGP. In terms of domain architecture, PX spans 533–663; that stretch reads LRITGTITAR…EFLALNTDAR (131 aa). 2 residues coordinate a 1,2-diacyl-sn-glycero-3-phospho-(1D-myo-inositol-3-phosphate): arginine 582 and arginine 629. Disordered stretches follow at residues 692 to 726, 778 to 797, and 973 to 992; these read FPRS…SRLR, QPTK…RVDS, and AATT…GVSS. 2 stretches are compositionally biased toward basic and acidic residues: residues 709–719 and 782–795; these read TESKPQTEGKK and APEK…KGRV. The segment covering 980–992 has biased composition (polar residues); the sequence is DTPGNSKRMGVSS.

The protein belongs to the sorting nexin family. In terms of assembly, interacts with PTPRN.

The protein resides in the early endosome membrane. The protein localises to the cytoplasmic vesicle membrane. Plays a role in intracellular vesicle trafficking and exocytosis. May play a role in maintaining insulin-containing dense core vesicles in pancreatic beta-cells and in preventing their degradation. May play a role in insulin secretion. Interacts with membranes containing phosphatidylinositol 3-phosphate (PtdIns(3P)). In Homo sapiens (Human), this protein is Sorting nexin-19 (SNX19).